A 381-amino-acid chain; its full sequence is Dual specificity protein phosphatase 6 (381 aa).

The region spanning 30–148 (GNEQLLLMDC…FQAEFALHCE (119 aa)) is the Rhodanese domain. The tract at residues 176–203 (SSSDIESDLDRDPNSATDSDGSPLSNSQ) is disordered. Residues 189 to 203 (NSATDSDGSPLSNSQ) are compositionally biased toward polar residues. A Tyrosine-protein phosphatase domain is found at 206–349 (FPVEILPFLY…LLDFERTLGL (144 aa)). Cys293 functions as the Phosphocysteine intermediate in the catalytic mechanism.

Belongs to the protein-tyrosine phosphatase family. Non-receptor class dual specificity subfamily. In terms of assembly, interacts with MAPK1/ERK2. In terms of processing, ubiquitinated by the SCF(FBXO31) complex, leading to its proteasomal degradation. As to expression, expressed in lung, heart, brain, and kidney, but not significantly in skeletal muscle or testis.

Its subcellular location is the cytoplasm. It carries out the reaction O-phospho-L-tyrosyl-[protein] + H2O = L-tyrosyl-[protein] + phosphate. The catalysed reaction is O-phospho-L-seryl-[protein] + H2O = L-seryl-[protein] + phosphate. The enzyme catalyses O-phospho-L-threonyl-[protein] + H2O = L-threonyl-[protein] + phosphate. In terms of biological role, dual specificity protein phosphatase, which mediates dephosphorylation and inactivation of MAP kinases. Has a specificity for the ERK family. Implicated in muscle and neuronal differentiation. Plays an important role in alleviating chronic postoperative pain. Necessary for the normal dephosphorylation of the long-lasting phosphorylated forms of spinal MAPK1/3 and MAP kinase p38 induced by peripheral surgery, which drives the resolution of acute postoperative allodynia. Also important for dephosphorylation of MAPK1/3 in local wound tissue, which further contributes to resolution of acute pain. This Rattus norvegicus (Rat) protein is Dual specificity protein phosphatase 6 (Dusp6).